A 190-amino-acid polypeptide reads, in one-letter code: Small ribosomal subunit protein uS5 (190 aa).

The 64-residue stretch at 21 to 84 (FADRLVAINR…EQAKRQMIRV (64 aa)) folds into the S5 DRBM domain. The segment at 156–190 (KKEQSPRSVAQRRGKKVADILPKRDEAPAAEAAEA) is disordered. Residues 171 to 182 (KVADILPKRDEA) show a composition bias toward basic and acidic residues.

This sequence belongs to the universal ribosomal protein uS5 family. In terms of assembly, part of the 30S ribosomal subunit. Contacts proteins S4 and S8.

With S4 and S12 plays an important role in translational accuracy. In terms of biological role, located at the back of the 30S subunit body where it stabilizes the conformation of the head with respect to the body. The chain is Small ribosomal subunit protein uS5 from Ruegeria pomeroyi (strain ATCC 700808 / DSM 15171 / DSS-3) (Silicibacter pomeroyi).